Consider the following 623-residue polypeptide: (-)-limonene synthase TPS1, chloroplastic (623 aa).

A chloroplast-targeting transit peptide spans 1–60; sequence MQCIAFHQFASSSSLPIWSSIDNRFTPKTSITSISKPKPKLKSKSNLKSRSRSSTCYPIQ. The interval 29–52 is disordered; it reads TSITSISKPKPKLKSKSNLKSRSR. The segment covering 37 to 51 has biased composition (basic residues); it reads PKPKLKSKSNLKSRS. Residues R337, D374, D378, R516, and D519 each contribute to the (2E)-geranyl diphosphate site. Mg(2+) contacts are provided by D374 and D378. A DDXXD motif motif is present at residues 374 to 378; sequence DDMHD. D519, T523, and E527 together coordinate Mg(2+).

It belongs to the terpene synthase family. Tpsb subfamily. The cofactor is Mg(2+). Requires Mn(2+) as cofactor. It depends on K(+) as a cofactor. As to expression, trichome.

Its subcellular location is the plastid. The protein resides in the chloroplast. It catalyses the reaction (2E)-geranyl diphosphate = (4S)-limonene + diphosphate. The enzyme catalyses (2E)-geranyl diphosphate = terpinolene + diphosphate. The catalysed reaction is (2E)-geranyl diphosphate = (1R,5R)-alpha-pinene + diphosphate. It carries out the reaction (2E)-geranyl diphosphate = (1R,5R)-beta-pinene + diphosphate. It catalyses the reaction (2E)-geranyl diphosphate = beta-myrcene + diphosphate. The enzyme catalyses (2E)-geranyl diphosphate = (4R)-limonene + diphosphate. The protein operates within secondary metabolite biosynthesis; terpenoid biosynthesis. Its pathway is terpene metabolism; (4S)-limonene biosynthesis; (4S)-limonene from geranyl diphosphate: step 1/1. Its function is as follows. Involved in monoterpene (C10) olefins biosynthesis, constituants of cannabinoids and terpenoids-rich resins. Catalyzes mainly the conversion of (2E)-geranyl diphosphate to (-)-limonene, and also produces minor products such as (+)-limonene, (+)-alpha-pinene, terpinolene, (+)-beta-pinene and beta-myrcene. This chain is (-)-limonene synthase TPS1, chloroplastic, found in Cannabis sativa (Hemp).